The primary structure comprises 134 residues: Ribosome-binding factor A (134 aa).

Belongs to the RbfA family. In terms of assembly, monomer. Binds 30S ribosomal subunits, but not 50S ribosomal subunits or 70S ribosomes.

It localises to the cytoplasm. One of several proteins that assist in the late maturation steps of the functional core of the 30S ribosomal subunit. Associates with free 30S ribosomal subunits (but not with 30S subunits that are part of 70S ribosomes or polysomes). Required for efficient processing of 16S rRNA. May interact with the 5'-terminal helix region of 16S rRNA. This chain is Ribosome-binding factor A, found in Baumannia cicadellinicola subsp. Homalodisca coagulata.